The chain runs to 1677 residues: Vitellogenin (1677 aa).

Residues 1–8 form the signal peptide; the sequence is LTIALVGS. The Vitellogenin domain occupies 17–655; it reads FSGSKTYQYK…NAASILPSAV (639 aa). 2 disordered regions span residues 1089–1232 and 1252–1280; these read TLRG…SEEI and FQNK…SKQD. Positions 1098 to 1122 are enriched in low complexity; it reads SSSSSSSSSSSSSSSSSSSSSSQQS. The segment covering 1123-1145 has biased composition (basic and acidic residues); sequence RMEKRMEQDKLTENLERDRDHMR. Over residues 1169–1196 the composition is skewed to low complexity; that stretch reads SSSSSSSSSSSGSNSSSSSSSSSSSSSR. N-linked (GlcNAc...) asparagine glycans are attached at residues asparagine 1182, asparagine 1202, asparagine 1217, and asparagine 1218. Over residues 1197-1212 the composition is skewed to basic residues; sequence SHNHRNNTRTLSKSKR. Low complexity-rich tracts occupy residues 1215–1229 and 1260–1273; these read NNNN…SSSS and SSSS…SSQS. The region spanning 1490–1675 is the VWFD domain; sequence SKCVAQENKF…TATEAASFCV (186 aa). 2 disulfides stabilise this stretch: cysteine 1492/cysteine 1631 and cysteine 1515/cysteine 1674. Residues 1636 to 1649 show a composition bias toward basic and acidic residues; that stretch reads GERRKEFRMPDGRQ. The interval 1636–1659 is disordered; the sequence is GERRKEFRMPDGRQARGPSVSPTP.

Post-translationally, phosvitin, an egg yolk storage protein, is one of the most highly phosphorylated (10%) proteins in nature. In terms of tissue distribution, found in liver, testis and undifferentiated gonads of estrogen-treated fish. Not detected in the brain and spleen.

Precursor of the major egg-yolk proteins that are sources of nutrients during early development of oviparous organisms. The protein is Vitellogenin of Acipenser transmontanus (White sturgeon).